A 401-amino-acid polypeptide reads, in one-letter code: Glutamyl-tRNA reductase (401 aa).

Residues 45–48, serine 101, 106–108, and glutamine 112 each bind substrate; these read TCNR and EDQ. The Nucleophile role is filled by cysteine 46. 177-182 contributes to the NADP(+) binding site; the sequence is GYGDVG.

This sequence belongs to the glutamyl-tRNA reductase family. In terms of assembly, homodimer.

The catalysed reaction is (S)-4-amino-5-oxopentanoate + tRNA(Glu) + NADP(+) = L-glutamyl-tRNA(Glu) + NADPH + H(+). It participates in porphyrin-containing compound metabolism; protoporphyrin-IX biosynthesis; 5-aminolevulinate from L-glutamyl-tRNA(Glu): step 1/2. Catalyzes the NADPH-dependent reduction of glutamyl-tRNA(Glu) to glutamate 1-semialdehyde (GSA). This chain is Glutamyl-tRNA reductase, found in Clostridium botulinum (strain Eklund 17B / Type B).